A 353-amino-acid chain; its full sequence is Phosphate acyltransferase (353 aa).

The protein belongs to the PlsX family. Homodimer. Probably interacts with PlsY.

It localises to the cytoplasm. The catalysed reaction is a fatty acyl-[ACP] + phosphate = an acyl phosphate + holo-[ACP]. The protein operates within lipid metabolism; phospholipid metabolism. In terms of biological role, catalyzes the reversible formation of acyl-phosphate (acyl-PO(4)) from acyl-[acyl-carrier-protein] (acyl-ACP). This enzyme utilizes acyl-ACP as fatty acyl donor, but not acyl-CoA. This is Phosphate acyltransferase from Rhodopseudomonas palustris (strain BisB5).